Reading from the N-terminus, the 960-residue chain is Dynamin-like GTPase OPA1, mitochondrial (960 aa).

The transit peptide at 1–87 (MWRLRRAAVA…IKYGYQPRRN (87 aa)) directs the protein to the mitochondrion. Over 88–96 (FWPARLATR) the chain is Mitochondrial matrix. The chain crosses the membrane as a helical span at residues 97 to 113 (LLKLRYLILGSAVGGGY). At 114–770 (TAKKTFDQWK…NAIENMVGPD (657 aa)) the chain is on the mitochondrial intermembrane side. Residues 210–254 (SDKEKIDQLQEELLHTQLKYQRILERLEKENKELRKLVLQKDDKG) adopt a coiled-coil conformation. An N6-acetyllysine modification is found at K228. The region spanning 285–561 (QDHLPRVVVV…FWKMVRESVE (277 aa)) is the Dynamin-type G domain. The interval 295 to 302 (GDQSAGKT) is G1 motif. GTP-binding residues include S298, G300, K301, T302, S303, and G317. T302 contributes to the Mg(2+) binding site. The interval 321–324 (MMTR) is G2 motif. Residues T323 and D398 each coordinate Mg(2+). The interval 398 to 401 (DLPG) is G3 motif. The G4 motif stretch occupies residues 467–470 (TKVD). GTP contacts are provided by K468, D470, and T503. The G5 motif stretch occupies residues 501–504 (VVTG). 2 stalk region regions span residues 589-836 (DRNE…IKDT) and 874-928 (CNDV…IKLL). Residues 736-856 (SDKQQWDAAI…KTALNHCNLC (121 aa)) form a paddle region region. An intramembrane segment occupies 771–781 (WKKRWLYWKNR). The Mitochondrial intermembrane portion of the chain corresponds to 782 to 960 (TQEQCVHNET…AFIEALHQEK (179 aa)). Cysteines 856 and 874 form a disulfide. Residues 895-960 (RQQLTNTEVR…AFIEALHQEK (66 aa)) are a coiled coil.

This sequence belongs to the TRAFAC class dynamin-like GTPase superfamily. Dynamin/Fzo/YdjA family. In terms of assembly, oligomeric complex consisting of membrane-bound and soluble forms of OPA1. Interacts with RCC1L; RCC1L acts as a guanine nucleotide exchange factor (GEF) for OPA1 by exchanging bound GDP for free GTP. Interacts with CHCHD3 and IMMT; these interactions occur preferentially with soluble OPA1 forms. Interacts with PRELID1. Cleaved by OMA1 or YME1L downstream of the transmembrane region in response to different signals to generate soluble forms. Cleaved by OMA1 at position S1 following stress conditions, generating the short soluble form (Dynamin-like GTPase OPA1, short form; S-OPA1). AFG3L2 is involved in the regulation of OMA1-dependent processing of OPA1. PARL-dependent proteolytic processing releases an antiapoptotic soluble form not required for mitochondrial fusion.

The protein localises to the mitochondrion inner membrane. The protein resides in the mitochondrion intermembrane space. It carries out the reaction GTP + H2O = GDP + phosphate + H(+). Activated by guanine nucleotide exchange factor RCC1L. Functionally, dynamin-related GTPase that is essential for normal mitochondrial morphology by mediating fusion of the mitochondrial inner membranes, regulating cristae morphology and maintaining respiratory chain function. Exists in two forms: the transmembrane, long form (Dynamin-like GTPase OPA1, long form; L-OPA1), which is tethered to the inner mitochondrial membrane, and the short soluble form (Dynamin-like GTPase OPA1, short form; S-OPA1), which results from proteolytic cleavage and localizes in the intermembrane space. Both forms (L-OPA1 and S-OPA1) cooperate to catalyze the fusion of the mitochondrial inner membrane. The equilibrium between L-OPA1 and S-OPA1 is essential: excess levels of S-OPA1, produced by cleavage by OMA1 following loss of mitochondrial membrane potential, lead to an impaired equilibrium between L-OPA1 and S-OPA1, inhibiting mitochondrial fusion. The balance between L-OPA1 and S-OPA1 also influences cristae shape and morphology. Involved in remodeling cristae and the release of cytochrome c during apoptosis. Proteolytic processing by PARL in response to intrinsic apoptotic signals may lead to disassembly of OPA1 oligomers and release of the caspase activator cytochrome C (CYCS) into the mitochondrial intermembrane space. Acts as a regulator of T-helper Th17 cells, which are characterized by cells with fused mitochondria with tight cristae, by mediating mitochondrial membrane remodeling: OPA1 is required for interleukin-17 (IL-17) production. Its role in mitochondrial morphology is required for mitochondrial genome maintenance. Its function is as follows. Constitutes the transmembrane long form (L-OPA1) that plays a central role in mitochondrial inner membrane fusion and cristae morphology. L-OPA1 and the soluble short form (S-OPA1) form higher-order helical assemblies that coordinate the fusion of mitochondrial inner membranes. Inner membrane-anchored L-OPA1 molecules initiate membrane remodeling by recruiting soluble S-OPA1 to rapidly polymerize into a flexible cylindrical scaffold encaging the mitochondrial inner membrane. Once at the membrane surface, the formation of S-OPA1 helices induce bilayer curvature. OPA1 dimerization through the paddle region, which inserts into cardiolipin-containing membrane, promotes GTP hydrolysis and the helical assembly of a flexible OPA1 lattice on the membrane, which drives membrane curvature and mitochondrial fusion. Plays a role in the maintenance and remodeling of mitochondrial cristae, some invaginations of the mitochondrial inner membrane that provide an increase in the surface area. Probably acts by forming helical filaments at the inside of inner membrane tubes with the shape and dimensions of crista junctions. The equilibrium between L-OPA1 and S-OPA1 influences cristae shape and morphology: increased L-OPA1 levels promote cristae stacking and elongated mitochondria, while increased S-OPA1 levels correlated with irregular cristae packing and round mitochondria shape. In terms of biological role, constitutes the soluble short form (S-OPA1) generated by cleavage by OMA1, which plays a central role in mitochondrial inner membrane fusion and cristae morphology. The transmembrane long form (L-OPA1) and the S-OPA1 form higher-order helical assemblies that coordinate the fusion of mitochondrial inner membranes. Inner membrane-anchored L-OPA1 molecules initiate membrane remodeling by recruiting soluble S-OPA1 to rapidly polymerize into a flexible cylindrical scaffold encaging the mitochondrial inner membrane. Once at the membrane surface, the formation of S-OPA1 helices induce bilayer curvature. OPA1 dimerization through the paddle region, which inserts into cardiolipin-containing membrane, promotes GTP hydrolysis and the helical assembly of a flexible OPA1 lattice on the membrane, which drives membrane curvature and mitochondrial fusion. Excess levels of S-OPA1 produced by cleavage by OMA1 following stress conditions that induce loss of mitochondrial membrane potential, lead to an impaired equilibrium between L-OPA1 and S-OPA1, thereby inhibiting mitochondrial fusion. Involved in mitochondrial safeguard in response to transient mitochondrial membrane depolarization by mediating flickering: cleavage by OMA1 leads to excess production of S-OPA1, preventing mitochondrial hyperfusion. Plays a role in the maintenance and remodeling of mitochondrial cristae, some invaginations of the mitochondrial inner membrane that provide an increase in the surface area. Probably acts by forming helical filaments at the inside of inner membrane tubes with the shape and dimensions of crista junctions. The equilibrium between L-OPA1 and S-OPA1 influences cristae shape and morphology: increased L-OPA1 levels promote cristae stacking and elongated mitochondria, while increased S-OPA1 levels correlated with irregular cristae packing and round mitochondria shape. The protein is Dynamin-like GTPase OPA1, mitochondrial of Pongo abelii (Sumatran orangutan).